Here is a 443-residue protein sequence, read N- to C-terminus: MPSQNAVFSQEGNMEEEEMNDGSQMVRSQESLTFQDVAVDFTREEWDQLYPAQKNLYRDVMLENYRNLVALGYQLCKPEVIAQLELEEEWVIERDSLLDTHPDGENRPEIKKSTTSQNISDENQTHEMIMERLAGDSFWYSILGGLWDFDYHPEFNQENHKRYLGQVTLTHKKITQERSLECNKFAENCNLNSNLMQQRIPSIKIPLNSDTQGNSIKHNSDLIYYQGNYVRETPYEYSECGKIFNQHILLTDHIHTAEKPSECGKAFSHTSSLSQPQMLLTGEKPYKCDECGKRFSQRIHLIQHQRIHTGEKPFICNGCGKAFRQHSSFTQHLRIHTGEKPYKCNQCGKAFSRITSLTEHHRLHTGEKPYECGFCGKAFSQRTHLNQHERTHTGEKPYKCNECGKAFSQSAHLNQHRKIHTREKLCEYKCEQTVRHSPSFSST.

Residues 1-10 are compositionally biased toward polar residues; sequence MPSQNAVFSQ. 2 disordered regions span residues 1-23 and 99-118; these read MPSQNAVFSQEGNMEEEEMNDGS and DTHPDGENRPEIKKSTTSQN. The KRAB domain occupies 32–102; the sequence is LTFQDVAVDF…ERDSLLDTHP (71 aa). Over residues 99–112 the composition is skewed to basic and acidic residues; sequence DTHPDGENRPEIKK. The segment at 255–280 adopts a C2H2-type 1; degenerate zinc-finger fold; the sequence is HTAEKPSECGKAFSHTSSLSQPQMLL. 5 consecutive C2H2-type zinc fingers follow at residues 286–308, 314–336, 342–364, 370–392, and 398–420; these read YKCDECGKRFSQRIHLIQHQRIH, FICNGCGKAFRQHSSFTQHLRIH, YKCNQCGKAFSRITSLTEHHRLH, YECGFCGKAFSQRTHLNQHERTH, and YKCNECGKAFSQSAHLNQHRKIH.

The protein belongs to the krueppel C2H2-type zinc-finger protein family. In terms of tissue distribution, expressed in fetal and adult brain.

The protein localises to the nucleus. May be involved in transcriptional regulation. The sequence is that of Zinc finger protein 713 from Homo sapiens (Human).